We begin with the raw amino-acid sequence, 380 residues long: Cytochrome b (380 aa).

4 helical membrane passes run 34–54, 78–99, 114–134, and 179–199; these read FGSLLGICLITQIITGLLLAM, WLIRHLHANGASFFFICIYLHI, WNIGVILLLTLMATAFVGYVL, and LFALHFLLPFVIAGLTLVHLT. His84 and His98 together coordinate heme b. Residues His183 and His197 each contribute to the heme b site. A ubiquinone is bound at residue His202. 4 consecutive transmembrane segments (helical) span residues 227–247, 289–309, 321–341, and 348–368; these read IKDLLGFVLMLTPLIAMALFA, LGGVLALAASVLVLFLIPLLH, LSQMLFWTLVADLLILTWVGS, and FIIIGQLASLAYFTIILVLFP.

It belongs to the cytochrome b family. The cytochrome bc1 complex contains 11 subunits: 3 respiratory subunits (MT-CYB, CYC1 and UQCRFS1), 2 core proteins (UQCRC1 and UQCRC2) and 6 low-molecular weight proteins (UQCRH/QCR6, UQCRB/QCR7, UQCRQ/QCR8, UQCR10/QCR9, UQCR11/QCR10 and a cleavage product of UQCRFS1). This cytochrome bc1 complex then forms a dimer. Requires heme b as cofactor.

Its subcellular location is the mitochondrion inner membrane. Functionally, component of the ubiquinol-cytochrome c reductase complex (complex III or cytochrome b-c1 complex) that is part of the mitochondrial respiratory chain. The b-c1 complex mediates electron transfer from ubiquinol to cytochrome c. Contributes to the generation of a proton gradient across the mitochondrial membrane that is then used for ATP synthesis. This is Cytochrome b (MT-CYB) from Aphelocoma coerulescens (Florida scrub-jay).